A 775-amino-acid polypeptide reads, in one-letter code: Glutamine--tRNA ligase (775 aa).

Ala-2 carries the N-acetylalanine modification. Residue Ser-70 is modified to Phosphoserine. ATP contacts are provided by residues 271–273 (EPN) and 277–283 (HIGHAKA). Asp-303 contributes to the L-glutamine binding site. An N6-acetyllysine modification is found at Lys-309. L-glutamine is bound at residue Tyr-438. ATP-binding positions include Thr-457, 486 to 487 (RL), and 494 to 496 (VSK). Ser-495 bears the Phosphoserine mark.

It belongs to the class-I aminoacyl-tRNA synthetase family. Monomer. Part of a multisubunit complex that groups tRNA ligases for Arg (RARS1), Asp (DARS1), Gln (QARS1), Ile (IARS1), Leu (LARS1), Lys (KARS1), Met (MARS1) the bifunctional ligase for Glu and Pro (EPRS1) and the auxiliary subunits AIMP1/p43, AIMP2/p38 and EEF1E1/p18. Interacts with RARS1. Part of a complex composed of RARS1, QARS1 and AIMP1. As to expression, detected in dorsal root ganglia (at protein level). Detected in dorsal root ganglia.

Its subcellular location is the cytoplasm. It is found in the cytosol. It catalyses the reaction tRNA(Gln) + L-glutamine + ATP = L-glutaminyl-tRNA(Gln) + AMP + diphosphate. Its function is as follows. Glutamine--tRNA ligase. Plays a critical role in brain development. The chain is Glutamine--tRNA ligase (Qars1) from Rattus norvegicus (Rat).